The following is a 576-amino-acid chain: Polyphenol oxidase 3 (576 aa).

6 residues coordinate Cu cation: H61, H85, H94, H259, H263, and H296. A cross-link (2'-(S-cysteinyl)-histidine (Cys-His)) is located at residues 83–85; the sequence is CTH. H263 lines the substrate pocket. Positions 393–576 are cleaved as a propeptide — removed in mature form; the sequence is FVTTQTENPA…ILDDIIHRVN (184 aa).

This sequence belongs to the tyrosinase family. In terms of assembly, tetramer composed of two subunits of PPO3 (H subunits) and two subunits of the as yet uncharacterized product of ORF239342 (L subunits). Cu(2+) is required as a cofactor. The C-ter is probably cleaved after Gly-392 since the mature active protein is smaller than the protein encoded by the gene.

It catalyses the reaction 2 L-dopa + O2 = 2 L-dopaquinone + 2 H2O. The enzyme catalyses L-tyrosine + O2 = L-dopaquinone + H2O. Copper-containing oxidase that catalyzes both the o-hydroxylation of monophenols and the subsequent oxidation of the resulting o-diphenols into reactive o-quinones, which evolve spontaneously to produce intermediates, which associate in dark brown pigments. Involved in the initial step of melanin synthesis. Melanins constitute a mechanism of defense and resistance to stress such as UV radiations, free radicals, gamma rays, dehydratation and extreme temperatures, and contribute to the fungal cell-wall resistance against hydrolytic enzymes in avoiding cellular lysis. Fungal pigments are also involved in the formation and stability of spores. The chain is Polyphenol oxidase 3 (PPO3) from Agaricus bisporus (White button mushroom).